Here is a 275-residue protein sequence, read N- to C-terminus: 4-deoxy-L-threo-5-hexosulose-uronate ketol-isomerase (275 aa).

Residues H193, H195, E200, and H242 each coordinate Zn(2+).

The protein belongs to the KduI family. Requires Zn(2+) as cofactor.

It catalyses the reaction 5-dehydro-4-deoxy-D-glucuronate = 3-deoxy-D-glycero-2,5-hexodiulosonate. It functions in the pathway glycan metabolism; pectin degradation; 2-dehydro-3-deoxy-D-gluconate from pectin: step 4/5. Catalyzes the isomerization of 5-dehydro-4-deoxy-D-glucuronate to 3-deoxy-D-glycero-2,5-hexodiulosonate. In Bacillus pumilus (strain SAFR-032), this protein is 4-deoxy-L-threo-5-hexosulose-uronate ketol-isomerase.